Here is a 491-residue protein sequence, read N- to C-terminus: MILDPLSPNIENHTQDEIIEFWEKTESIANIPKENLDESHVNSSLVAYLKFATDSYKVFINTDRDLYRMSLILLESSLFEFKKEFCLSKLQSLLNIDLLEMNMKFIIVYILLCEAKKNVYSLEIMLKFQGFTVFYNTLYTQFAYLSKYGKERTVASKHQYNSNNSSTGTSLDSLDRSLTDIDLGIIDEMKQISTVLMDLLFQIMKYCKCVIANLQIVDDFFVYYMMESMRSDTMDDMFNNAEFKLLLALNEQYMMFAKEYDIENKVYKYLINGSVSRCFTELLLLKFNRASDPPLQIMMCKIIYLILTPRGDYSPMNFFYTNDLRVLIDVLIRELQNISEDEEVLRNTLLRVLIPLLKNTQLSKTHYRKDDLNKLLNYLSTLDNICVDSPALHEHQVTVALSRKCLQQIPWLETPSTPSDGGSSVSSNNTSRNSSIVALGTPDNQNILARKGHLYSNRELDVSAESLTKRKAKAPPPPPPPPPSRKCGTPK.

Position 7 is a phosphoserine (Ser7). Positions 413–491 are disordered; that stretch reads ETPSTPSDGG…PPSRKCGTPK (79 aa). Residues 414–435 are compositionally biased toward low complexity; the sequence is TPSTPSDGGSSVSSNNTSRNSS. Residues Ser463 and Ser466 each carry the phosphoserine modification. Over residues 474-484 the composition is skewed to pro residues; sequence APPPPPPPPPS.

This sequence belongs to the LDB17 family.

It localises to the cytoplasm. The protein resides in the bud. The protein localises to the bud neck. In terms of biological role, may be involved in protein-linked oligosaccharide phosphorylation since the deletion reduces the negative charge of the cell surface. This is Protein LDB17 (LDB17) from Saccharomyces cerevisiae (strain ATCC 204508 / S288c) (Baker's yeast).